Reading from the N-terminus, the 241-residue chain is 4-hydroxy-tetrahydrodipicolinate reductase (241 aa).

NAD(+) contacts are provided by residues 80–82 (ATT) and 104–107 (SANM). The active-site Proton donor/acceptor is the H136. H137 is a binding site for (S)-2,3,4,5-tetrahydrodipicolinate. K140 (proton donor) is an active-site residue. 146-147 (GT) contacts (S)-2,3,4,5-tetrahydrodipicolinate.

The protein belongs to the DapB family.

It is found in the cytoplasm. It carries out the reaction (S)-2,3,4,5-tetrahydrodipicolinate + NAD(+) + H2O = (2S,4S)-4-hydroxy-2,3,4,5-tetrahydrodipicolinate + NADH + H(+). It catalyses the reaction (S)-2,3,4,5-tetrahydrodipicolinate + NADP(+) + H2O = (2S,4S)-4-hydroxy-2,3,4,5-tetrahydrodipicolinate + NADPH + H(+). It functions in the pathway amino-acid biosynthesis; L-lysine biosynthesis via DAP pathway; (S)-tetrahydrodipicolinate from L-aspartate: step 4/4. Functionally, catalyzes the conversion of 4-hydroxy-tetrahydrodipicolinate (HTPA) to tetrahydrodipicolinate. The chain is 4-hydroxy-tetrahydrodipicolinate reductase from Staphylococcus haemolyticus (strain JCSC1435).